The following is a 941-amino-acid chain: Zinc finger protein su(Hw) (941 aa).

Disordered stretches follow at residues 1 to 97 (MSAS…APAA) and 176 to 211 (ENNN…NSSQ). The span at 47-57 (STTTTTSRTPS) shows a compositional bias: low complexity. A compositionally biased stretch (acidic residues) spans 185–202 (VTEDDEDLGEDGDEDGED). Threonine 186 is modified (phosphothreonine). The C2H2-type 1; atypical zinc-finger motif lies at 220–242 (HVCGKCYKTFRRVQSLKKHLEFC). Residues 290–313 (INCPDCPKSFKTQTSYERHIFITH) form a C2H2-type 2 zinc finger. The segment at 319–341 (FPCSICNANLRSEALLALHEEQH) adopts a C2H2-type 3; atypical zinc-finger fold. 9 consecutive C2H2-type zinc fingers follow at residues 348-366 (YACK…LKRH), 380-402 (MSCK…LKQH), 413-435 (YMCH…IRTH), 441-463 (FDCD…RRYH), 469-491 (YSCT…MKRH), 497-519 (HKCD…SKTH), 523-545 (FPCE…VKTH), 553-577 (FSCA…EGKH), and 596-619 (TDCA…RTVH). The tract at residues 760 to 860 (ILTEEDIKLK…PIDDVIEYVL (101 aa)) is interaction with mod(mdg4). Residues 864 to 941 (DQDEGGLDKD…KKPVGEQEKA (78 aa)) are disordered. 2 stretches are compositionally biased toward basic and acidic residues: residues 869-880 (GLDKDNESHSGD) and 891-941 (KTNE…QEKA).

In terms of assembly, component of the gypsy chromatin insulator complex, composed of Cp190, mod(mdg4) and su(Hw). The gypsy chromatin insulator complex interacts with Topors via mod(mdg4) and su(Hw). Upon ecdysone stimulation, interacts with Nup98.

It is found in the nucleus. Its subcellular location is the chromosome. In terms of biological role, component of the gypsy chromatin insulator complex which is required for the function of the gypsy chromatin insulator and other endogenous chromatin insulators. Chromatin insulators are regulatory elements which establish independent domains of transcriptional activity within eukaryotic genomes. Insulators have two defining properties; they can block the communication between an enhancer and a promoter when placed between them and can also buffer transgenes from position effect variegation (PEV). Insulators are proposed to structure the chromatin fiber into independent domains of differing transcriptional potential by promoting the formation of distinct chromatin loops. This chromatin looping may involve the formation of insulator bodies, where homotypic interactions between individual subunits of the insulator complex could promote the clustering of widely spaced insulators at the nuclear periphery. Within the gypsy insulator complex, this protein binds specifically to a region of the gypsy element located 3' of the 5' long terminal repeat (LTR), and may also mediate interaction with other endogenous insulators at sites distinct from those recognized by Cp190. Cooperates with pita and cliff to recruit Cp190 and regulate insulator function at the front-ultraabdominal (Fub) boundary. The sequence is that of Zinc finger protein su(Hw) from Drosophila melanogaster (Fruit fly).